Here is a 55-residue protein sequence, read N- to C-terminus: Accessory gland-specific peptide 70A (55 aa).

Positions 1-19 are cleaved as a signal peptide; that stretch reads MKTLSVFLVLVCLLGLVQS. Hydroxyproline occurs at positions 28, 32, 34, and 38. A disulfide bond links Cys43 and Cys55.

Main cells of the accessory glands of males (paragonial gland).

It is found in the secreted. Its function is as follows. Represses female sexual receptivity and stimulates oviposition. The protein is Accessory gland-specific peptide 70A (Acp70A) of Drosophila sechellia (Fruit fly).